We begin with the raw amino-acid sequence, 218 residues long: MNVQIKICGLTDPDRAAECFELGADAVGLVFYPPSPRFVIDDLALEICQALPKSAPKVGVFVNDTYEFIMNKAERCGITMAQLHGHESQELADRLEKAGIGVIKAFFANRSPDFKAMTEYSAQACLVECAGEKLPGGNAKAWAWRTARGISERMPLALAGGLDPENVSQAILDAMPDALDVSSGVEASPGVKDMDKVKRFIQNATQTGIDYQPRKVFS.

The protein belongs to the TrpF family.

The catalysed reaction is N-(5-phospho-beta-D-ribosyl)anthranilate = 1-(2-carboxyphenylamino)-1-deoxy-D-ribulose 5-phosphate. It functions in the pathway amino-acid biosynthesis; L-tryptophan biosynthesis; L-tryptophan from chorismate: step 3/5. The sequence is that of N-(5'-phosphoribosyl)anthranilate isomerase from Desulfatibacillum aliphaticivorans.